The sequence spans 28 residues: GCIEIGGDCDGYQEKSYCQCCRNNGFCS.

This sequence belongs to the neurotoxin 04 (omega-agtx) family. 03 (type II/III omega-agtx) subfamily. Expressed by the venom gland.

The protein resides in the secreted. In terms of biological role, omega-agatoxin are antagonist of voltage-gated calcium channels. They block insect neuromuscular transmission presynaptically. Potent blocker of N-type calcium channels (Cav2.2/CACNA1B). The polypeptide is Omega-agatoxin-Aa2a (Agelenopsis aperta (North American funnel-web spider)).